A 66-amino-acid chain; its full sequence is Small ribosomal subunit protein eS27 (66 aa).

C21, C24, C40, and C43 together coordinate Zn(2+). The C4-type zinc finger occupies 21 to 43 (CPNCGNEQTVFSHATFPVRCLSC).

Belongs to the eukaryotic ribosomal protein eS27 family. Part of the 30S ribosomal subunit. Zn(2+) serves as cofactor.

The polypeptide is Small ribosomal subunit protein eS27 (Sulfurisphaera tokodaii (strain DSM 16993 / JCM 10545 / NBRC 100140 / 7) (Sulfolobus tokodaii)).